Reading from the N-terminus, the 394-residue chain is Phosphoglycerate kinase (394 aa).

Substrate is bound by residues 21–23 (DFN), Arg-36, 59–62 (HLGR), Arg-118, and Arg-151. ATP-binding positions include Lys-202, Gly-293, Glu-324, and 350–353 (GGDS).

Belongs to the phosphoglycerate kinase family. Monomer.

The protein localises to the cytoplasm. It catalyses the reaction (2R)-3-phosphoglycerate + ATP = (2R)-3-phospho-glyceroyl phosphate + ADP. It participates in carbohydrate degradation; glycolysis; pyruvate from D-glyceraldehyde 3-phosphate: step 2/5. The protein is Phosphoglycerate kinase of Exiguobacterium sp. (strain ATCC BAA-1283 / AT1b).